Consider the following 340-residue polypeptide: Dihydroorotate dehydrogenase (quinone) (340 aa).

FMN is bound by residues A67–K71 and T91. K71 is a binding site for substrate. N116–F120 lines the substrate pocket. Positions 143 and 176 each coordinate FMN. N176 serves as a coordination point for substrate. S179 (nucleophile) is an active-site residue. N181 serves as a coordination point for substrate. 2 residues coordinate FMN: K217 and T245. N246–T247 lines the substrate pocket. FMN contacts are provided by residues G267, G296, and Y317–T318.

It belongs to the dihydroorotate dehydrogenase family. Type 2 subfamily. In terms of assembly, monomer. It depends on FMN as a cofactor.

It is found in the cell membrane. It catalyses the reaction (S)-dihydroorotate + a quinone = orotate + a quinol. It participates in pyrimidine metabolism; UMP biosynthesis via de novo pathway; orotate from (S)-dihydroorotate (quinone route): step 1/1. Catalyzes the conversion of dihydroorotate to orotate with quinone as electron acceptor. This Christiangramia forsetii (strain DSM 17595 / CGMCC 1.15422 / KT0803) (Gramella forsetii) protein is Dihydroorotate dehydrogenase (quinone).